The chain runs to 263 residues: Retinoic acid early transcript 1E (263 aa).

Residues 1–30 form the signal peptide; the sequence is MRRISLTSSPVRLLLFLLLLLIALEIMVGG. The segment at 31-116 is MHC class I alpha-1 like; down-regulates the cell surface expression of KLRK1; the sequence is HSLCFNFTIK…DIKPQIKTSD (86 aa). Over 31–225 the chain is Extracellular; that stretch reads HSLCFNFTIK…IHWSSSSLPD (195 aa). N-linked (GlcNAc...) asparagine glycans are attached at residues Asn-36, Asn-154, and Asn-212. Residues 117–207 are MHC class I alpha-2 like; down-regulates the cell surface expression of KLRK1; it reads PSTLQVEMFC…GHWEAMPEPT (91 aa). Cys-126 and Cys-189 are oxidised to a cystine. The chain crosses the membrane as a helical span at residues 226–248; the sequence is RWIILGAFILLVLMGIVLICVWW. At 249–263 the chain is on the cytoplasmic side; it reads QNGEWQAGLWPLRTS.

Belongs to the MHC class I family. In terms of assembly, binds to KLRK1/NKG2D. As to quaternary structure, (Microbial infection) Contrary to other family members, does not interact with CMV glycoprotein UL16. As to expression, predominantly expressed in the skin, but also expressed in testis and trachea. Up-regulated in tumor cells of different origins. Expression progressively decreased after treatment of tumor cells with retinoic acid.

The protein resides in the membrane. It localises to the secreted. Functionally, binds and activates the KLRK1/NKG2D receptor, mediating natural killer cell cytotoxicity. The polypeptide is Retinoic acid early transcript 1E (Homo sapiens (Human)).